The chain runs to 372 residues: Innexin shaking-B (372 aa).

The Cytoplasmic segment spans residues 1 to 21 (MLDIFRGLKNLVKVSHVKTDS). Residues 22 to 42 (IVFRLHYSITVMILMSFSLII) form a helical membrane-spanning segment. Residues 43 to 110 (TTRQYVGNPI…PADKKHYKYY (68 aa)) lie on the Extracellular side of the membrane. A helical membrane pass occupies residues 111–131 (QWVCFCLFFQAILFYTPRWLW). At 132–182 (KSWEGGKIHALIMDLDIGICSEAEKKQKKKLLLDYLWENLRYHNWWAYRYY) the chain is on the cytoplasmic side. Residues 183–203 (VCELLALINVIGQMFLMNRFF) traverse the membrane as a helical segment. Residues 204–267 (DGEFITFGLK…ILPLNVVNEK (64 aa)) are Extracellular-facing. Residues 268–288 (IYIFLWFWFILLTFLTLLTLI) form a helical membrane-spanning segment. The Cytoplasmic portion of the chain corresponds to 289–372 (YRVVIIFSPR…PGLKGEIQDA (84 aa)).

The protein belongs to the pannexin family. As to quaternary structure, monomer (isoform Lethal). In terms of tissue distribution, isoform Neural is expressed in synapses of giant fibers (GF), in a large thoracic cell in location of postsynaptic target and optic lobe lamina and medulla. Isoform Lethal is expressed in embryonic mesodermal derivatives. During metamorphosis, both isoforms are dynamically expressed in pupal nervous system.

It is found in the cell membrane. Its subcellular location is the cell junction. The protein localises to the gap junction. In terms of biological role, structural component of the gap junctions at electrical synapses in distal and mid-depth levels in the lamina. Isoform Lethal forms voltage sensitive intercellular channels through homotypic interactions. In Drosophila melanogaster (Fruit fly), this protein is Innexin shaking-B (shakB).